A 239-amino-acid chain; its full sequence is Small ribosomal subunit protein uS2 (239 aa).

The protein belongs to the universal ribosomal protein uS2 family.

In Lysinibacillus sphaericus (strain C3-41), this protein is Small ribosomal subunit protein uS2.